A 496-amino-acid chain; its full sequence is Rhamnulokinase (496 aa).

Residue 13 to 17 (ASSGR) coordinates ATP. Residues G83 and 236–238 (HDT) contribute to the substrate site. D237 (proton acceptor) is an active-site residue. T259 lines the ATP pocket. N296 serves as a coordination point for substrate. Q304 contributes to the ATP binding site. Cysteines 353 and 370 form a disulfide. G402 serves as a coordination point for ATP. The cysteines at positions 413 and 417 are disulfide-linked.

The protein belongs to the rhamnulokinase family. The cofactor is Mg(2+).

It catalyses the reaction L-rhamnulose + ATP = L-rhamnulose 1-phosphate + ADP + H(+). It functions in the pathway carbohydrate degradation; L-rhamnose degradation; glycerone phosphate from L-rhamnose: step 2/3. In terms of biological role, involved in the catabolism of L-rhamnose (6-deoxy-L-mannose). Catalyzes the transfer of the gamma-phosphate group from ATP to the 1-hydroxyl group of L-rhamnulose to yield L-rhamnulose 1-phosphate. In Pectobacterium carotovorum subsp. carotovorum (strain PC1), this protein is Rhamnulokinase.